The following is a 249-amino-acid chain: Sec-independent protein translocase protein TatC (249 aa).

A run of 6 helical transmembrane segments spans residues 18 to 38 (VSVG…KNIF), 69 to 89 (AIVI…APGL), 96 to 116 (VILP…AFSY), 151 to 171 (LILG…LAKV), 187 to 207 (IVVI…SQIF), and 208 to 228 (MALP…MVNP).

The protein belongs to the TatC family. In terms of assembly, the Tat system comprises two distinct complexes: a TatABC complex, containing multiple copies of TatA, TatB and TatC subunits, and a separate TatA complex, containing only TatA subunits. Substrates initially bind to the TatABC complex, which probably triggers association of the separate TatA complex to form the active translocon.

It localises to the cell inner membrane. Functionally, part of the twin-arginine translocation (Tat) system that transports large folded proteins containing a characteristic twin-arginine motif in their signal peptide across membranes. Together with TatB, TatC is part of a receptor directly interacting with Tat signal peptides. In Helicobacter pylori (strain J99 / ATCC 700824) (Campylobacter pylori J99), this protein is Sec-independent protein translocase protein TatC.